The chain runs to 292 residues: Acetylglutamate kinase (292 aa).

Residues 64-65, Arg86, and Asn190 each bind substrate; that span reads GG.

Belongs to the acetylglutamate kinase family. ArgB subfamily.

It is found in the cytoplasm. The enzyme catalyses N-acetyl-L-glutamate + ATP = N-acetyl-L-glutamyl 5-phosphate + ADP. It functions in the pathway amino-acid biosynthesis; L-arginine biosynthesis; N(2)-acetyl-L-ornithine from L-glutamate: step 2/4. In terms of biological role, catalyzes the ATP-dependent phosphorylation of N-acetyl-L-glutamate. This chain is Acetylglutamate kinase, found in Geotalea uraniireducens (strain Rf4) (Geobacter uraniireducens).